The sequence spans 930 residues: Progesterone receptor (930 aa).

The segment covering 1–11 (MTELKAKEPRA) has biased composition (basic and acidic residues). Disordered regions lie at residues 1-133 (MTEL…ASPA) and 148-260 (LPED…SGAA). Residues 1 to 165 (MTELKAKEPR…PATKGVLAPL (165 aa)) are AF3; mediates transcriptional activation. Residues 1-565 (MTELKAKEPR…PQYSFESLPQ (565 aa)) form a modulating, Pro-Rich region. Lysine 7 is covalently cross-linked (Glycyl lysine isopeptide (Lys-Gly) (interchain with G-Cter in SUMO)). Residue serine 20 is modified to Phosphoserine. Over residues 38 to 49 (QGSQTSEASSVV) the composition is skewed to polar residues. The LXXL motif 1 motif lies at 56-60 (LDGLL). A Phosphoserine modification is found at serine 82. The LXXL motif 2 signature appears at 116 to 120 (LDTLL). A Phosphoserine modification is found at serine 131. A mediates transcriptional transrepression region spans residues 166–304 (MSRPEDKAGD…LATSVVDFIH (139 aa)). The Nuclear localization signal motif lies at 184–188 (KVLPR). Residues 187 to 204 (PRGLSPSRQLLLPSSGSP) are compositionally biased toward low complexity. Phosphoserine occurs at positions 191 and 212. The residue at position 293 (serine 293) is a Phosphoserine; by MAPK1. Residues 334–356 (AASPFVPQRGSPSASSTPVAGGD) are disordered. At serine 344 the chain carries Phosphoserine; by MAPK. Lysine 387 participates in a covalent cross-link: Glycyl lysine isopeptide (Lys-Gly) (interchain with G-Cter in SUMO); alternate. A Glycyl lysine isopeptide (Lys-Gly) (interchain with G-Cter in ubiquitin); alternate cross-link involves residue lysine 387. Serine 399 bears the Phosphoserine; by CDK2 mark. A disordered region spans residues 415–454 (DFQLAAPPPPSLPPRVPSSRPGEAAVAASPGSASVSSSSS). The span at 420 to 430 (APPPPSLPPRV) shows a compositional bias: pro residues. A compositionally biased stretch (low complexity) spans 431-454 (PSSRPGEAAVAASPGSASVSSSSS). The segment at 457–547 (STLECILYKA…VYTPYLNYLR (91 aa)) is AF1; mediates transcriptional activation. Lysine 532 participates in a covalent cross-link: Glycyl lysine isopeptide (Lys-Gly) (interchain with G-Cter in SUMO). Residues 566–640 (KICLICGDEA…AGMVLGGRKF (75 aa)) constitute a DNA-binding region (nuclear receptor). 2 consecutive NR C4-type zinc fingers follow at residues 568–588 (CLIC…CGSC) and 604–628 (CAGR…LRKC). Serine 673 carries the phosphoserine modification. Residues 676 to 910 (QEIQLIPPLI…EFPEMMSEVI (235 aa)) form the NR LBD domain. Residues 684 to 930 (LINLLMSIEP…MVKPLLFHKK (247 aa)) form an AF2; mediates transcriptional activation region. Arginine 763 contacts progesterone.

This sequence belongs to the nuclear hormone receptor family. NR3 subfamily. As to quaternary structure, interacts with SMARD1 and UNC45A. Interacts with CUEDC2; the interaction promotes ubiquitination, decreases sumoylation, and represses transcriptional activity. Interacts with PIAS3; the interaction promotes sumoylation of PR in a hormone-dependent manner, inhibits DNA-binding, and alters nuclear export. Interacts with SP1; the interaction requires ligand-induced phosphorylation on Ser-344 by ERK1/2-MAPK. Interacts with PRMT2. Interacts with NCOA2 and NCOA1. Interacts with KLF9. Interacts with GTF2B. In terms of processing, phosphorylated on multiple serine sites. Several of these sites are hormone-dependent. Phosphorylation on Ser-293 is highly hormone-dependent and modulates ubiquitination and sumoylation on Lys-387. Phosphorylation on Ser-102 and Ser-344 also requires induction by hormone. Basal phosphorylation on Ser-82, Ser-191 and Ser-399 is increased in response to progesterone and can be phosphorylated in vitro by the CDK2-A1 complex. Increased levels of phosphorylation on Ser-399 also in the presence of EGF, heregulin, IGF, PMA and FBS. Phosphorylation at this site by CDK2 is ligand-independent, and increases nuclear translocation and transcriptional activity. Phosphorylation at Ser-293, but not at Ser-191, is impaired during the G(2)/M phase of the cell cycle. Phosphorylation on Ser-344 by ERK1/2 MAPK is required for interaction with SP1. Sumoylation is hormone-dependent and represses transcriptional activity. Sumoylation on all three sites is enhanced by PIAS3. Desumoylated by SENP1. Sumoylation on Lys-387, the main site of sumoylation, is repressed by ubiquitination on the same site, and modulated by phosphorylation at Ser-293. Post-translationally, ubiquitination is hormone-dependent and represses sumoylation on the same site. Promoted by MAPK-mediated phosphorylation on Ser-293. Ubiquitinated by UBR5, leading to its degradation: UBR5 specifically recognizes and binds ligand-bound PGR when it is not associated with coactivators (NCOAs). In presence of NCOAs, the UBR5-degron is not accessible, preventing its ubiquitination and degradation. In terms of processing, palmitoylated by ZDHHC7 and ZDHHC21. Palmitoylation is required for plasma membrane targeting and for rapid intracellular signaling via ERK and AKT kinases and cAMP generation.

It localises to the nucleus. The protein resides in the cytoplasm. The steroid hormones and their receptors are involved in the regulation of eukaryotic gene expression and affect cellular proliferation and differentiation in target tissues. Transcriptional activator of several progesteron-dependent promoters in a variety of cell types. Involved in activation of SRC-dependent MAPK signaling on hormone stimulation. The chain is Progesterone receptor (PGR) from Oryctolagus cuniculus (Rabbit).